The chain runs to 70 residues: Sec-independent protein translocase protein TatA (70 aa).

A helical transmembrane segment spans residues 1 to 21 (MGSFSVWHWLIVLVIVLVLFG). A disordered region spans residues 42–70 (GMADEDQTPPPADANANAKTVDHKADEIK). A compositionally biased stretch (basic and acidic residues) spans 61–70 (TVDHKADEIK).

It belongs to the TatA/E family. In terms of assembly, the Tat system comprises two distinct complexes: a TatABC complex, containing multiple copies of TatA, TatB and TatC subunits, and a separate TatA complex, containing only TatA subunits. Substrates initially bind to the TatABC complex, which probably triggers association of the separate TatA complex to form the active translocon.

The protein localises to the cell inner membrane. In terms of biological role, part of the twin-arginine translocation (Tat) system that transports large folded proteins containing a characteristic twin-arginine motif in their signal peptide across membranes. TatA could form the protein-conducting channel of the Tat system. The chain is Sec-independent protein translocase protein TatA from Agrobacterium fabrum (strain C58 / ATCC 33970) (Agrobacterium tumefaciens (strain C58)).